The primary structure comprises 132 residues: Phosphoribosyl-AMP cyclohydrolase (132 aa).

Position 76 (D76) interacts with Mg(2+). Zn(2+) is bound at residue C77. The Mg(2+) site is built by D78 and D80. Zn(2+)-binding residues include C93 and C100.

The protein belongs to the PRA-CH family. Homodimer. Mg(2+) serves as cofactor. Zn(2+) is required as a cofactor.

It is found in the cytoplasm. It carries out the reaction 1-(5-phospho-beta-D-ribosyl)-5'-AMP + H2O = 1-(5-phospho-beta-D-ribosyl)-5-[(5-phospho-beta-D-ribosylamino)methylideneamino]imidazole-4-carboxamide. It functions in the pathway amino-acid biosynthesis; L-histidine biosynthesis; L-histidine from 5-phospho-alpha-D-ribose 1-diphosphate: step 3/9. Its function is as follows. Catalyzes the hydrolysis of the adenine ring of phosphoribosyl-AMP. The sequence is that of Phosphoribosyl-AMP cyclohydrolase from Methanobrevibacter smithii (strain ATCC 35061 / DSM 861 / OCM 144 / PS).